Consider the following 174-residue polypeptide: MHRFVLALVVFAGAAIVWAADDAAHEEGVEWTGKPWMGKWESDPSKDENVEEFKKKLQLPMSHSEMNKNSKVWIHHYKKGDEYHHKIIINDAHYKNDIVFKLGQESAGSYNGSSFSVKYEDKDGALVGSVHYTGTKEQSLDKTINNVFKLEGDHLVKTSTIEGVTMKRHYNKRQ.

Positions M1–A19 are cleaved as a signal peptide. Residues E30 to P60 are SAHS-c1. The segment at Y77–E105 is SAHS-c2. A glycan (N-linked (GlcNAc...) asparagine) is linked at N111. Residues K118 to K172 are SAHS-c3.

The protein belongs to the Secretory-abundant heat soluble protein (SAHS) family.

Its subcellular location is the secreted. Secreted heat soluble protein acting as a molecular shield in water-deficient condition. Tardigrade-specific intrinsically disordered proteins (TDPs) are essential for desiccation tolerance by forming non-crystalline amorphous solids upon desiccation, and this vitrified state mirrors their protective capabilities. The protein is Secretory-abundant heat soluble protein 2 of Ramazzottius varieornatus (Water bear).